Consider the following 411-residue polypeptide: Glutamate dehydrogenase (411 aa).

Residue Lys-102 is part of the active site.

The protein belongs to the Glu/Leu/Phe/Val dehydrogenases family.

The catalysed reaction is L-glutamate + NAD(+) + H2O = 2-oxoglutarate + NH4(+) + NADH + H(+). The enzyme catalyses L-glutamate + NADP(+) + H2O = 2-oxoglutarate + NH4(+) + NADPH + H(+). The sequence is that of Glutamate dehydrogenase (GDH1) from Zea mays (Maize).